Consider the following 138-residue polypeptide: Small ribosomal subunit protein uS11c (138 aa).

Residues 1 to 23 form a disordered region; the sequence is MKKPIPRIGSRRNGRIGSRKNGR.

This sequence belongs to the universal ribosomal protein uS11 family. In terms of assembly, part of the 30S ribosomal subunit.

It localises to the plastid. The protein localises to the chloroplast. The protein is Small ribosomal subunit protein uS11c of Amborella trichopoda.